The sequence spans 113 residues: Gamma-glutamylcyclotransferase family protein YtfP (113 aa).

This sequence belongs to the gamma-glutamylcyclotransferase family.

This Escherichia coli O157:H7 protein is Gamma-glutamylcyclotransferase family protein YtfP (ytfP).